Consider the following 1134-residue polypeptide: MSEPHRVQFTSLPGSLNPAFLKKSRKEEAGAGEQHQDCEPAAAAVRITLTLFEPDHKRCPEFFYPELVKNIRGKVKGLQPGDKKKDLSDPFNDEEKERHKVEALARKFEEKYGGKKRRKDRIQDLIDMGYGYDESDSFIDNSEAYDELVPASLTTKYGGFYINSGTLQFRQASESEDDFIKEKKKKSPKKRKLKEGGEKIKKKKKDDTYDKEKKSKKSKFSKAGFTALNASKEKKKKKYSGALSVKEMLKKFQKEKEAQKKREEEHKPVAVPSAEAQGLRELEGASDPLLSLFGSTSDNDLLQAATAMDSLTDLDLEHLLSESPEGSPFRDMDDGSDSLGVGLDQEFRQPSSLPEGLPAPLEKRVKELAQAARAAEGESRQKFFTQDINGILLDIEAQTRELSSQVRSGVYAYLASFLPCSKDALLKRARKLHLYEQGGRLKEPLQKLKEAIGRAMPEQMAKYQDECQAHTQAKVAKMLEEEKDKEQRDRICSDEEEDEEKGGRRIMGPRKKFQWNDEIRELLCQVVKIKLESQDLERNNKAQAWEDCVKGFLDAEVKPLWPKGWMQARTLFKESRRGHGHLTSILAKKKVMAPSKIKVKESSTKPDKKVSVPSGQIGGPIALPSDHQTGGLSIGASSRELPSQASGGLANPPPVNLEDSLDEDLIRNPASSVEAVSKELAALNSRAAGNSEFTLPAPSKAPAEKVGGVLCTEEKRNFAKPSPSAPPPASSLQSPLNFLAEQALALGQSSQEKKPESSGYKELSCQAPLNKGLPEVHQSKAKHHSLPRTSHGPQVAVPVPGPQVKVFHAGTQQQKNFTPPSPFANKLQGPKASPTQCHRSLLQLVKTAAKGQGFHPSAPATSGGLSASSSSSHKTPASSSSALSHPAKPHSVSSAGSSYKNNPFASSISKHGVSSGSSSSGGTPVQSSVSGSLVPGIQPPSVGQATSRPVPSSAGKKMPVSQKLTLVAPPGGPNGDSSGGTQGVAKLLTSPSLKPSAVSSVTSSTSLSKGASGTVLLAGSSLMASPYKSSSPKLSGAMSSNSLGIITPVPIPVHVLSFSADSSAKAGVSKDAIVTGPAPGSFHHGLGHSLLAGLHSSPPHAAPLPHAAVPTHIPQSLPGASQLHGKGPAVPRKL.

2 disordered regions span residues 1 to 38 and 78 to 98; these read MSEP…HQDC and LQPG…EKER. Positions 1 to 166 are sufficient for interaction with HIRA; the sequence is MSEPHRVQFT…YGGFYINSGT (166 aa). 2 stretches are compositionally biased toward basic and acidic residues: residues 25–38 and 81–98; these read RKEE…HQDC and GDKK…EKER. The residue at position 166 (Thr-166) is a Phosphothreonine. The interval 171-220 is disordered; it reads QASESEDDFIKEKKKKSPKKRKLKEGGEKIKKKKKDDTYDKEKKSKKSKF. Residues Ser-173 and Ser-175 each carry the phosphoserine modification. Over residues 182–193 the composition is skewed to basic residues; it reads EKKKKSPKKRKL. A compositionally biased stretch (basic and acidic residues) spans 194–213; that stretch reads KEGGEKIKKKKKDDTYDKEK. N6-acetyllysine is present on Lys-222. The span at 253 to 268 shows a compositional bias: basic and acidic residues; sequence QKEKEAQKKREEEHKP. Disordered stretches follow at residues 253–282, 321–358, 480–504, and 594–660; these read QKEK…LREL, SESP…EGLP, EEEK…KGGR, and PSKI…LEDS. Phosphoserine is present on residues Ser-323, Ser-336, Ser-338, and Ser-493. A coiled-coil region spans residues 479–542; it reads LEEEKDKEQR…SQDLERNNKA (64 aa). Basic and acidic residues-rich tracts occupy residues 480 to 493 and 598 to 610; these read EEEK…RICS and KVKE…DKKV. Ser-660 and Ser-677 each carry phosphoserine. Disordered regions lie at residues 712–836 and 852–986; these read TEEK…SPTQ and QGFH…GVAK. 2 stretches are compositionally biased toward low complexity: residues 792–804 and 856–891; these read GPQV…GPQV and PSAP…KPHS. Over residues 892 to 905 the composition is skewed to polar residues; sequence VSSAGSSYKNNPFA. Over residues 906–932 the composition is skewed to low complexity; the sequence is SSISKHGVSSGSSSSGGTPVQSSVSGS. Polar residues predominate over residues 941–950; the sequence is SVGQATSRPV. Positions 973–982 are enriched in gly residues; that stretch reads PNGDSSGGTQ. Position 1025 is a phosphoserine (Ser-1025). A compositionally biased stretch (low complexity) spans 1093–1108; the sequence is GLHSSPPHAAPLPHAA. Residues 1093-1134 are disordered; it reads GLHSSPPHAAPLPHAAVPTHIPQSLPGASQLHGKGPAVPRKL.

It belongs to the ubinuclein family. Component of a complex that includes at least ASF1A, CABIN1, HIRA, histone H3.3 and UBN1. Interacts with HIRA (via WD repeat domain); the interaction is direct. Interacts with ASF1A, CEBPA, TJP1, TJP2 and TJP3. In terms of assembly, (Microbial infection) Interacts with Epstein-Barr virus BZLF1. In terms of tissue distribution, ubiquitous. Also expressed in numerous tumors and cancer cell lines.

It is found in the nucleus. Its subcellular location is the nucleoplasm. The protein resides in the PML body. The protein localises to the cell junction. It localises to the tight junction. In terms of biological role, acts as a novel regulator of senescence. Involved in the formation of senescence-associated heterochromatin foci (SAHF), which represses expression of proliferation-promoting genes. Binds to proliferation-promoting genes. May be required for replication-independent chromatin assembly. This is Ubinuclein-1 (UBN1) from Homo sapiens (Human).